The following is a 262-amino-acid chain: Phosphatidylglycerol--prolipoprotein diacylglyceryl transferase (262 aa).

4 helical membrane-spanning segments follow: residues 17-37, 57-77, 95-115, and 119-139; these read LAIH…YALG, LIFY…VLFY, GGMS…LFAH, and LGFF…LAAG. R140 is an a 1,2-diacyl-sn-glycero-3-phospho-(1'-sn-glycerol) binding site. 3 consecutive transmembrane segments (helical) span residues 173-193, 200-220, and 227-247; these read PSQL…LWWY, AGQV…LVEF, and FLGL…PMVL.

This sequence belongs to the Lgt family.

It localises to the cell inner membrane. It catalyses the reaction L-cysteinyl-[prolipoprotein] + a 1,2-diacyl-sn-glycero-3-phospho-(1'-sn-glycerol) = an S-1,2-diacyl-sn-glyceryl-L-cysteinyl-[prolipoprotein] + sn-glycerol 1-phosphate + H(+). It functions in the pathway protein modification; lipoprotein biosynthesis (diacylglyceryl transfer). Functionally, catalyzes the transfer of the diacylglyceryl group from phosphatidylglycerol to the sulfhydryl group of the N-terminal cysteine of a prolipoprotein, the first step in the formation of mature lipoproteins. This Bordetella bronchiseptica (strain ATCC BAA-588 / NCTC 13252 / RB50) (Alcaligenes bronchisepticus) protein is Phosphatidylglycerol--prolipoprotein diacylglyceryl transferase.